The sequence spans 120 residues: Large ribosomal subunit protein eL18 (120 aa).

Belongs to the eukaryotic ribosomal protein eL18 family.

This chain is Large ribosomal subunit protein eL18, found in Thermoplasma acidophilum (strain ATCC 25905 / DSM 1728 / JCM 9062 / NBRC 15155 / AMRC-C165).